The following is an 80-amino-acid chain: MAKTFSSICFTTLLLVVLFISTEIPKSEAHCDHFLGEAPVYPCKEKACKSVCKEHYHHACKGECEYHGREVHCHCYGDYH.

An N-terminal signal peptide occupies residues 1–29 (MAKTFSSICFTTLLLVVLFISTEIPKSEA). 3 disulfides stabilise this stretch: C43/C64, C48/C73, and C52/C75.

The protein belongs to the DEFL family.

The protein localises to the secreted. The protein is Defensin-like protein 204 of Arabidopsis thaliana (Mouse-ear cress).